A 561-amino-acid polypeptide reads, in one-letter code: Microtubule-associated protein VP6 (561 aa).

As to quaternary structure, interacts with VP2.

Its subcellular location is the virion. The protein resides in the host cytoplasm. The protein localises to the host cytoskeleton. Its function is as follows. Minor inner capsid component. Displays NTPase and RNA 5'-triphosphatase (RTPase) activities. May function as a cofactor of polymerase VP2. Associates with microtubules and plays a role in the formation, structural organization and morphology of viral inclusions, where the assembly of cores and the replication of viral RNA occur. The chain is Microtubule-associated protein VP6 (S6) from Lymantria dispar cypovirus 1 (isolate Rao) (LdCPV-1).